Consider the following 177-residue polypeptide: MRLPKEGDFITIQSYKHDGSLHRTWRDTMVLKTTENALIGVNDHTLVTENDGRRWVTREPAIVYFHKKYWFNIIAMIRETGVSYYCNLASPYILDPEALKYIDYDLDVKVFADGEKRLLDVDEYEQHKAQMNYPTDIDYILKENVKILVEWINENKGPFSSSYINIWYKRYLELKKR.

Arg-23 acts as the Proton donor in catalysis. Positions 87, 103, 105, 107, 120, and 123 each coordinate Mg(2+).

This sequence belongs to the Ntdp family. Mg(2+) serves as cofactor.

It catalyses the reaction a ribonucleoside 5'-triphosphate + H2O = a ribonucleoside 5'-diphosphate + phosphate + H(+). It carries out the reaction a ribonucleoside 5'-diphosphate + H2O = a ribonucleoside 5'-phosphate + phosphate + H(+). Its function is as follows. Has nucleoside phosphatase activity towards nucleoside triphosphates and nucleoside diphosphates. The chain is Nucleoside triphosphate/diphosphate phosphatase from Streptococcus agalactiae serotype Ia (strain ATCC 27591 / A909 / CDC SS700).